The following is a 299-amino-acid chain: GTPase Era (299 aa).

Positions 5–172 (KSGFVSIIGR…IDVLKTYLPE (168 aa)) constitute an Era-type G domain. Residues 13 to 20 (GRPNVGKS) form a G1 region. 13 to 20 (GRPNVGKS) is a GTP binding site. The interval 39 to 43 (QTTRN) is G2. Residues 60–63 (DTPG) are G3. Residues 60–64 (DTPGI) and 122–125 (NKID) contribute to the GTP site. A G4 region spans residues 122-125 (NKID). The interval 151-153 (ISA) is G5. In terms of domain architecture, KH type-2 spans 203–280 (TSEEIPHAIG…YLELWVKVQR (78 aa)).

This sequence belongs to the TRAFAC class TrmE-Era-EngA-EngB-Septin-like GTPase superfamily. Era GTPase family. In terms of assembly, monomer.

The protein localises to the cytoplasm. It localises to the cell membrane. Functionally, an essential GTPase that binds both GDP and GTP, with rapid nucleotide exchange. Plays a role in 16S rRNA processing and 30S ribosomal subunit biogenesis and possibly also in cell cycle regulation and energy metabolism. The polypeptide is GTPase Era (Staphylococcus aureus (strain NCTC 8325 / PS 47)).